The sequence spans 343 residues: Anthranilate phosphoribosyltransferase (343 aa).

5-phospho-alpha-D-ribose 1-diphosphate-binding positions include Gly-84, 87–88 (GD), Thr-92, 94–97 (NIST), 112–120 (KHGNRGVSS), and Ser-124. Gly-84 provides a ligand contact to anthranilate. Ser-96 contributes to the Mg(2+) binding site. An anthranilate-binding site is contributed by Asn-115. Anthranilate is bound at residue Arg-170. The Mg(2+) site is built by Asp-229 and Glu-230.

The protein belongs to the anthranilate phosphoribosyltransferase family. As to quaternary structure, homodimer. Mg(2+) is required as a cofactor.

It carries out the reaction N-(5-phospho-beta-D-ribosyl)anthranilate + diphosphate = 5-phospho-alpha-D-ribose 1-diphosphate + anthranilate. Its pathway is amino-acid biosynthesis; L-tryptophan biosynthesis; L-tryptophan from chorismate: step 2/5. Catalyzes the transfer of the phosphoribosyl group of 5-phosphorylribose-1-pyrophosphate (PRPP) to anthranilate to yield N-(5'-phosphoribosyl)-anthranilate (PRA). The polypeptide is Anthranilate phosphoribosyltransferase (Burkholderia cenocepacia (strain ATCC BAA-245 / DSM 16553 / LMG 16656 / NCTC 13227 / J2315 / CF5610) (Burkholderia cepacia (strain J2315))).